The primary structure comprises 37 residues: Large ribosomal subunit protein bL36A (37 aa).

It belongs to the bacterial ribosomal protein bL36 family.

The polypeptide is Large ribosomal subunit protein bL36A (Neisseria meningitidis serogroup C (strain 053442)).